The sequence spans 388 residues: L-cysteine desulfidase (388 aa).

Residue cysteine 25 is the Proton acceptor of the active site. [4Fe-4S] cluster contacts are provided by cysteine 282, cysteine 322, and cysteine 329.

The protein belongs to the L-cysteine desulfidase family. In terms of assembly, homotrimer. [4Fe-4S] cluster is required as a cofactor.

It carries out the reaction L-cysteine + H2O = hydrogen sulfide + pyruvate + NH4(+) + H(+). Its function is as follows. Catalyzes the cleavage of L-cysteine to form 2-aminoprop-2-enoate and sulfide. The former then spontaneously hydrolyzes to pyruvate and NH(3). May be responsible for the production of sulfide required for the biosynthesis of iron-sulfur centers in this archaea. Is very specific for L-cysteine, with no activity being detected with D-cysteine, L-homocysteine, 3-mercaptopropionate (cysteine without the amino group), cysteamine (cysteine without the carboxylate), or mercaptolactate (the hydroxyl analog of cysteine). This chain is L-cysteine desulfidase, found in Methanocaldococcus jannaschii (strain ATCC 43067 / DSM 2661 / JAL-1 / JCM 10045 / NBRC 100440) (Methanococcus jannaschii).